The chain runs to 92 residues: MAKRTKKVGIVGKYGTRYGASLRKTVKKMEITQHSKYTCQFCGKDAMKRQAVGIWGCKSCRKVVAGGAWVYSTMAAVTVRSAVRRLREMKES.

The C4-type zinc finger occupies 39 to 60 (CQFCGKDAMKRQAVGIWGCKSC).

The protein belongs to the eukaryotic ribosomal protein eL43 family.

The protein is Large ribosomal subunit protein eL43 (RPL37A) of Cryptochiton stelleri (Giant gumboot chiton).